The following is a 238-amino-acid chain: Modulator of macroautophagy TMEM150B (238 aa).

Topologically, residues 1-8 (MWNYLSLL) are cytoplasmic. The helical transmembrane segment at 9-29 (PVILFLWAIAGIWIVFAIAVV) threads the bilayer. N30 carries N-linked (GlcNAc...) asparagine glycosylation. Topologically, residues 30 to 51 (NGSVDLNEGFPFISICGSYAPQ) are extracellular. A helical membrane pass occupies residues 52-72 (SCIFGQVLNIGAALTVWICIV). Residues 73–86 (RHHQLRDWGVKTWQ) are Cytoplasmic-facing. The chain crosses the membrane as a helical span at residues 87-107 (NQLILWSGILCALGTSIVGNF). Over 108-116 (QDKNQKPTH) the chain is Extracellular. A helical membrane pass occupies residues 117–137 (LAGAFLAFILGNLYFWLQFFL). Residues 138–156 (SWWVKGLPQPGPHWIKSLR) lie on the Cytoplasmic side of the membrane. A helical transmembrane segment spans residues 157-177 (LSLCSLSTILIVAMIVLHALH). The Extracellular portion of the chain corresponds to 178 to 186 (MRSASAICE). Residues 187-207 (WVVAMLLFMLFGFFAVDFSIL) form a helical membrane-spanning segment. Residues 208–238 (RGCTLHLHPRLDSSLPQAPSGSPNIQMAQVL) are Cytoplasmic-facing.

The protein belongs to the DRAM/TMEM150 family.

It is found in the cell membrane. The protein resides in the endosome membrane. Its subcellular location is the cytoplasmic vesicle. It localises to the autophagosome membrane. Functionally, modulator of macroautophagy that causes accumulation of autophagosomes under basal conditions and enhances autophagic flux. Represses cell death and promotes long-term clonogenic survival of cells grown in the absence of glucose in a macroautophagy-independent manner. May have some role in extracellular matrix engulfment or growth factor receptor recycling, both of which can modulate cell survival. The chain is Modulator of macroautophagy TMEM150B from Mus musculus (Mouse).